The sequence spans 152 residues: Arginine repressor (152 aa).

It belongs to the ArgR family.

The protein resides in the cytoplasm. The protein operates within amino-acid biosynthesis; L-arginine biosynthesis [regulation]. In terms of biological role, regulates arginine biosynthesis genes. In Lactococcus lactis subsp. lactis (strain IL1403) (Streptococcus lactis), this protein is Arginine repressor.